Consider the following 291-residue polypeptide: ATP synthase gamma chain (291 aa).

Belongs to the ATPase gamma chain family. In terms of assembly, F-type ATPases have 2 components, CF(1) - the catalytic core - and CF(0) - the membrane proton channel. CF(1) has five subunits: alpha(3), beta(3), gamma(1), delta(1), epsilon(1). CF(0) has three main subunits: a, b and c.

The protein resides in the cell inner membrane. Functionally, produces ATP from ADP in the presence of a proton gradient across the membrane. The gamma chain is believed to be important in regulating ATPase activity and the flow of protons through the CF(0) complex. This chain is ATP synthase gamma chain, found in Sphingopyxis alaskensis (strain DSM 13593 / LMG 18877 / RB2256) (Sphingomonas alaskensis).